The sequence spans 175 residues: Alpha-crystallin B chain (175 aa).

Methionine 1 is modified (N-acetylmethionine). Serine 19 is subject to Phosphoserine. Serine 41 carries O-linked (GlcNAc) serine glycosylation. Phosphoserine occurs at positions 45 and 59. A sHSP domain is found at 56–164; that stretch reads RAPSWIDTGL…PERTIPITRE (109 aa). Position 83 (histidine 83) interacts with Zn(2+). The residue at position 92 (lysine 92) is an N6-acetyllysine. Zn(2+) is bound by residues histidine 104, glutamate 106, histidine 111, and histidine 119. The disordered stretch occupies residues 142-175; the sequence is VLTVNGPRKQASGPERTIPITREEKPAVTAAPKK. At lysine 166 the chain carries N6-acetyllysine. A glycan (O-linked (GlcNAc) threonine) is linked at threonine 170.

This sequence belongs to the small heat shock protein (HSP20) family. In terms of assembly, heteromer composed of three CRYAA and one CRYAB subunits. Aggregates with homologous proteins, including the small heat shock protein HSPB1, to form large heteromeric complexes. Inter-subunit bridging via zinc ions enhances stability, which is crucial as there is no protein turn over in the lens. Interacts with HSPBAP1 and TTN/titin. Interacts with TMEM109; in the cellular response to DNA damage. Interacts with DES; binds rapidly during early stages of DES filament assembly and a reduced binding seen in the later stages. Interacts with ATP6V1A and with MTOR, forming a ternary complex. As to expression, lens as well as other tissues.

Its subcellular location is the cytoplasm. It is found in the nucleus. It localises to the secreted. The protein resides in the lysosome. Its function is as follows. May contribute to the transparency and refractive index of the lens. Has chaperone-like activity, preventing aggregation of various proteins under a wide range of stress conditions. In lens epithelial cells, stabilizes the ATP6V1A protein, preventing its degradation by the proteasome. This chain is Alpha-crystallin B chain (CRYAB), found in Spalax judaei (Judean Mountains blind mole rat).